The primary structure comprises 269 residues: Putative hydro-lyase RL2444 (269 aa).

The protein belongs to the D-glutamate cyclase family.

The polypeptide is Putative hydro-lyase RL2444 (Rhizobium johnstonii (strain DSM 114642 / LMG 32736 / 3841) (Rhizobium leguminosarum bv. viciae)).